A 270-amino-acid chain; its full sequence is NAD kinase (270 aa).

Aspartate 61 serves as the catalytic Proton acceptor. Residues 61-62 (DG), 133-134 (NE), arginine 144, arginine 163, aspartate 165, and 176-181 (TAYNLS) each bind NAD(+).

It belongs to the NAD kinase family. It depends on a divalent metal cation as a cofactor.

Its subcellular location is the cytoplasm. It carries out the reaction NAD(+) + ATP = ADP + NADP(+) + H(+). Involved in the regulation of the intracellular balance of NAD and NADP, and is a key enzyme in the biosynthesis of NADP. Catalyzes specifically the phosphorylation on 2'-hydroxyl of the adenosine moiety of NAD to yield NADP. The polypeptide is NAD kinase (Natronomonas pharaonis (strain ATCC 35678 / DSM 2160 / CIP 103997 / JCM 8858 / NBRC 14720 / NCIMB 2260 / Gabara) (Halobacterium pharaonis)).